The chain runs to 184 residues: NADH-quinone oxidoreductase subunit B (184 aa).

Residues Cys-63, Cys-64, Cys-128, and Cys-158 each contribute to the [4Fe-4S] cluster site.

This sequence belongs to the complex I 20 kDa subunit family. NDH-1 is composed of 14 different subunits. Subunits NuoB, C, D, E, F, and G constitute the peripheral sector of the complex. It depends on [4Fe-4S] cluster as a cofactor.

The protein localises to the cell inner membrane. It carries out the reaction a quinone + NADH + 5 H(+)(in) = a quinol + NAD(+) + 4 H(+)(out). Functionally, NDH-1 shuttles electrons from NADH, via FMN and iron-sulfur (Fe-S) centers, to quinones in the respiratory chain. The immediate electron acceptor for the enzyme in this species is believed to be ubiquinone. Couples the redox reaction to proton translocation (for every two electrons transferred, four hydrogen ions are translocated across the cytoplasmic membrane), and thus conserves the redox energy in a proton gradient. The polypeptide is NADH-quinone oxidoreductase subunit B (Xylella fastidiosa (strain M12)).